The following is a 484-amino-acid chain: Diaminopimelate decarboxylase 1, chloroplastic (484 aa).

Positions 1 to 28 (MAAATQFLSQPSSLNPHQLKNQTSQRSR) are enriched in polar residues. Residues 1–30 (MAAATQFLSQPSSLNPHQLKNQTSQRSRSI) form a disordered region. A chloroplast-targeting transit peptide spans 1–49 (MAAATQFLSQPSSLNPHQLKNQTSQRSRSIPVLSLKSTLKPLKRLSVKA). Ala-50 bears the N-acetylalanine mark. Lys-125 carries the N6-(pyridoxal phosphate)lysine modification. Residues Gly-304 and 340 to 343 (EPGR) contribute to the pyridoxal 5'-phosphate site. Substrate-binding residues include Arg-343, Arg-379, and Tyr-383. The active-site Proton donor is the Cys-411. Substrate contacts are provided by Glu-412 and Tyr-440. Tyr-440 lines the pyridoxal 5'-phosphate pocket.

It belongs to the Orn/Lys/Arg decarboxylase class-II family. LysA subfamily. In terms of assembly, homodimer. It depends on pyridoxal 5'-phosphate as a cofactor.

It localises to the plastid. Its subcellular location is the chloroplast. It carries out the reaction meso-2,6-diaminopimelate + H(+) = L-lysine + CO2. The protein operates within amino-acid biosynthesis; L-lysine biosynthesis via DAP pathway; L-lysine from DL-2,6-diaminopimelate: step 1/1. Functionally, specifically catalyzes the decarboxylation of meso-diaminopimelate (meso-DAP) to L-lysine. The polypeptide is Diaminopimelate decarboxylase 1, chloroplastic (LYSA1) (Arabidopsis thaliana (Mouse-ear cress)).